We begin with the raw amino-acid sequence, 244 residues long: Acetoacetate decarboxylase (244 aa).

Lys-115 acts as the Schiff-base intermediate with acetoacetate in catalysis.

It belongs to the ADC family.

The catalysed reaction is acetoacetate + H(+) = acetone + CO2. Functionally, catalyzes the conversion of acetoacetate to acetone and carbon dioxide. The chain is Acetoacetate decarboxylase from Streptomyces nogalater.